The following is a 199-amino-acid chain: Recombination protein RecR (199 aa).

The C4-type zinc finger occupies 58 to 73 (CQTCHHLSAEPTCEIC). The 95-residue stretch at 81–175 (GQICVVADSR…RVSRIAYGLP (95 aa)) folds into the Toprim domain.

Belongs to the RecR family.

Functionally, may play a role in DNA repair. It seems to be involved in an RecBC-independent recombinational process of DNA repair. It may act with RecF and RecO. The chain is Recombination protein RecR from Synechococcus sp. (strain WH7803).